We begin with the raw amino-acid sequence, 123 residues long: Large ribosomal subunit protein bL19 (123 aa).

The protein belongs to the bacterial ribosomal protein bL19 family.

Functionally, this protein is located at the 30S-50S ribosomal subunit interface and may play a role in the structure and function of the aminoacyl-tRNA binding site. The protein is Large ribosomal subunit protein bL19 of Laribacter hongkongensis (strain HLHK9).